A 70-amino-acid polypeptide reads, in one-letter code: Large ribosomal subunit protein bL32 (70 aa).

A compositionally biased stretch (basic residues) spans 1–19 (MAVPKKKTSPSRRGMRRSH). The disordered stretch occupies residues 1–21 (MAVPKKKTSPSRRGMRRSHQA).

Belongs to the bacterial ribosomal protein bL32 family.

The chain is Large ribosomal subunit protein bL32 from Granulibacter bethesdensis (strain ATCC BAA-1260 / CGDNIH1).